Reading from the N-terminus, the 148-residue chain is Large ribosomal subunit protein bL9 (148 aa).

This sequence belongs to the bacterial ribosomal protein bL9 family.

Functionally, binds to the 23S rRNA. In Caldicellulosiruptor saccharolyticus (strain ATCC 43494 / DSM 8903 / Tp8T 6331), this protein is Large ribosomal subunit protein bL9.